A 142-amino-acid polypeptide reads, in one-letter code: Baculoviral IAP repeat-containing protein 5 (142 aa).

The stretch at 18–88 (RIYTFKNWPF…KHSPGCAFLT (71 aa)) is one BIR repeat. At lysine 23 the chain carries N6-acetyllysine. A Phosphothreonine; by CDK1 and CDK15 modification is found at threonine 34. At threonine 48 the chain carries Phosphothreonine. Zn(2+) is bound by residues cysteine 57, cysteine 60, histidine 77, and cysteine 84. An N6-acetyllysine mark is found at lysine 90, lysine 110, lysine 112, and lysine 115. A Phosphothreonine; by AURKB modification is found at threonine 117.

This sequence belongs to the IAP family. Monomer or homodimer. Exists as a homodimer in the apo state and as a monomer in the CPC-bound state. The monomer protects cells against apoptosis more efficiently than the dimer. Only the dimeric form is capable of enhancing tubulin stability in cells. When phosphorylated, interacts with LAMTOR5/HBXIP; the resulting complex binds pro-CASP9, as well as active CASP9, but much less efficiently. Component of the chromosomal passenger complex (CPC) composed of at least BIRC5/survivin, CDCA8/borealin, INCENP, AURKB or AURKC; in the complex forms a triple-helix bundle-based subcomplex with INCENP and CDCA8. Interacts with JTB. Interacts (via BIR domain) with histone H3 phosphorylated at 'Thr-3' (H3pT3). Interacts with EVI5. Interacts with GTP-bound RAN in both the S and M phases of the cell cycle. Interacts with USP9X. Interacts with tubulin. Interacts with BIRC2/c-IAP1. The monomeric form interacts with XIAP/BIRC4. Both the dimeric and monomeric form can interact with DIABLO/SMAC. Interacts with BIRC6/bruce. Interacts with FBXL7; this interaction facilitates the polyubiquitination and subsequent proteasomal degradation of BIRC5 by the SCF(FBXL7) E3 ubiquitin-protein ligase complex. Post-translationally, ubiquitinated by the Cul9-RING ubiquitin-protein ligase complex, leading to its degradation. Ubiquitination is required for centrosomal targeting. Deubiquitinated by USP35 or USP38; leading to stabilization. In terms of processing, in vitro phosphorylation at Thr-117 by AURKB prevents interaction with INCENP and localization to mitotic chromosomes. Phosphorylation at Thr-48 by CK2 is critical for its mitotic and anti-apoptotic activities. Phosphorylation at Thr-34 by CDK15 is critical for its anti-apoptotic activity.

The protein resides in the cytoplasm. The protein localises to the nucleus. It is found in the chromosome. Its subcellular location is the centromere. It localises to the cytoskeleton. The protein resides in the spindle. The protein localises to the kinetochore. It is found in the midbody. Its function is as follows. Multitasking protein that has dual roles in promoting cell proliferation and preventing apoptosis. Component of a chromosome passage protein complex (CPC) which is essential for chromosome alignment and segregation during mitosis and cytokinesis. Acts as an important regulator of the localization of this complex; directs CPC movement to different locations from the inner centromere during prometaphase to midbody during cytokinesis and participates in the organization of the center spindle by associating with polymerized microtubules. Involved in the recruitment of CPC to centromeres during early mitosis via association with histone H3 phosphorylated at 'Thr-3' (H3pT3) during mitosis. The complex with RAN plays a role in mitotic spindle formation by serving as a physical scaffold to help deliver the RAN effector molecule TPX2 to microtubules. May counteract a default induction of apoptosis in G2/M phase. The acetylated form represses STAT3 transactivation of target gene promoters. May play a role in neoplasia. Inhibitor of CASP3 and CASP7. Essential for the maintenance of mitochondrial integrity and function. The polypeptide is Baculoviral IAP repeat-containing protein 5 (Birc5) (Rattus norvegicus (Rat)).